Here is a 117-residue protein sequence, read N- to C-terminus: Large ribosomal subunit protein bL20 (117 aa).

It belongs to the bacterial ribosomal protein bL20 family.

Binds directly to 23S ribosomal RNA and is necessary for the in vitro assembly process of the 50S ribosomal subunit. It is not involved in the protein synthesizing functions of that subunit. In Rickettsia bellii (strain OSU 85-389), this protein is Large ribosomal subunit protein bL20.